Consider the following 938-residue polypeptide: GGISVPGPMGPSGPRGLPGPPGAPGPQGFQGPPGEPGEPGASGPMGPRGPPGPPGKNGDDGEAGKPGRPGERGPPGPQGARGLPGTAGLPGMKGHRGFSGLDGAKGDAGPAGPKGRPGASGPAGARGNDGATGAAGPPGPTGPAGPPGFPGAVGAKGEAGPQGARGSEGPQGVRGEPGPPGPAGAAGPAGNPGADGQPGAKGANGAPGIAGAPGFPGARGPSGPQGPSGPPGPKGNSGEPGAPGNKGDTGAKGEPGPTGIQGPPGPAGEEGKRGARGEPGPTGLPGPPGERGGPGSRGFPGADGVAGPKERGSPGPAGPKGSPGEAGRPGEAGLPGAKGLTGSPGSPGPDGKTGPPGPAGQDGRPGPPGPPGARGQAGVMGFPGPKGAAGEPGKAGERGVPGPPGAVGPAGKDGEAGAQGPPGPAGPAGERGEQGPAGPGFQGLPGPAGPPGGEQGVPGDLGAPGPSGARGERGFPGERGVQGPPGPAGPRGSNGAPGSQGAPGLQGMPGERGAAGLPGPKGDRGDAGPKGADGAPGKDGVRGLTGPIGPPGPAGAPGDKGESGPSGPAGPTGARGAPGDRGEPGPPGPAGFAGPPGADGQPGAKGEPGDAGAKGDAGPPGPAGPTGPPGPIGNVGAPGPKGARGSAGPPGATGFPGAAGRVGPPGPSGNAGPPGPPGPVGKEGGETGPAGRPGEVGPPGGSPGADGPAGAPGTPGPQGISGQRGVVGLPGQRGERGFPGLPGPSGEPGKQGPSGSSGERGPPGPMGPPGLAGPPGESGREGAPGAEGSPGRDGSPGPKGDRGETGPGPPGAPGAPGAPGPVGPAGKNGDRGETGPAGPAGPAGPAGARGPAGPQGPRRGFSGLQGPAGPPGSPGEQGPSGASGPAGPRGPPGSAGSPGKDGLNGLPGPIGPPGPRTGDAGPVGPPGPPGPPGPPGPP.

The interval 1 to 938 (GGISVPGPMG…PGPPGPPGPP (938 aa)) is disordered. 4-hydroxyproline occurs at positions 18, 21, 24, 33, 36, 39, 54, 69, 75, 84, and 90. Residues 26–45 (PQGFQGPPGEPGEPGASGPM) are compositionally biased toward low complexity. Over residues 57 to 71 (NGDDGEAGKPGRPGE) the composition is skewed to basic and acidic residues. Lysine 93 carries the 5-hydroxylysine; alternate modification. Lysine 93 carries an O-linked (Gal...) hydroxylysine; alternate glycan. Residue serine 99 is modified to Phosphoserine. Over residues 107 to 135 (DAGPAGPKGRPGASGPAGARGNDGATGAA) the composition is skewed to low complexity. A 4-hydroxyproline mark is found at proline 117, proline 138, proline 147, proline 150, proline 177, proline 180, proline 192, proline 198, proline 207, proline 213, proline 216, and proline 231. The span at 137–149 (PPGPTGPAGPPGF) shows a compositional bias: pro residues. The span at 183–222 (AGAAGPAGNPGADGQPGAKGANGAPGIAGAPGFPGARGPS) shows a compositional bias: low complexity. 5-hydroxylysine is present on lysine 234. 4-hydroxyproline is present on residues proline 240, proline 243, proline 255, proline 264, proline 279, proline 285, proline 294, and proline 300. The segment covering 289 to 298 (GERGGPGSRG) has biased composition (gly residues). Position 309 is a 5-hydroxylysine (lysine 309). 25 positions are modified to 4-hydroxyproline: proline 314, proline 323, proline 329, proline 335, proline 344, proline 347, proline 356, proline 365, proline 371, proline 383, proline 392, proline 401, proline 404, proline 422, proline 439, proline 445, proline 451, proline 458, proline 464, proline 476, proline 485, proline 497, proline 503, proline 509, and proline 518. A compositionally biased stretch (low complexity) spans 338–364 (KGLTGSPGSPGPDGKTGPPGPAGQDGR). Positions 373–392 (ARGQAGVMGFPGPKGAAGEP) are enriched in low complexity. Lysine 530 is modified (5-hydroxylysine). 4-hydroxyproline is present on residues proline 536, proline 551, and proline 557. Low complexity predominate over residues 563–577 (SGPSGPAGPTGARGA). At serine 566 the chain carries Phosphoserine. 4-hydroxyproline occurs at positions 578, 584, 587, 596, 602, 620, 629, and 638. The span at 590–617 (AGFAGPPGADGQPGAKGEPGDAGAKGDA) shows a compositional bias: low complexity. Positions 619–631 (PPGPAGPTGPPGP) are enriched in pro residues. Lysine 641 is modified (5-hydroxylysine). A compositionally biased stretch (low complexity) spans 646 to 662 (SAGPPGATGFPGAAGRV). 4-hydroxyproline occurs at positions 650 and 656. Position 664 is a 3-hydroxyproline (proline 664). 4-hydroxyproline is present on residues proline 665, proline 674, proline 677, proline 693, proline 703, proline 712, proline 730, proline 739, proline 742, proline 748, proline 763, proline 769, proline 775, proline 784, and proline 790. Residues 762–772 (PPGPMGPPGLA) show a composition bias toward pro residues. At lysine 799 the chain carries 5-hydroxylysine. Positions 807–822 (PGPPGAPGAPGAPGPV) are enriched in pro residues. Proline 810, proline 813, and proline 816 each carry 4-hydroxyproline. A compositionally biased stretch (low complexity) spans 843–867 (AGPAGARGPAGPQGPRRGFSGLQGP). A 4-hydroxyproline mark is found at proline 871, proline 874, proline 892, and proline 907. A compositionally biased stretch (low complexity) spans 874–907 (PGEQGPSGASGPAGPRGPPGSAGSPGKDGLNGLP). At proline 912 the chain carries 3-hydroxyproline. Proline 913 carries the post-translational modification 4-hydroxyproline. Residues 923 to 938 (VGPPGPPGPPGPPGPP) show a composition bias toward pro residues. Proline 925 is modified (3-hydroxyproline). Proline 926 is modified (4-hydroxyproline). Proline 928 carries the 3-hydroxyproline modification. At proline 929 the chain carries 4-hydroxyproline. Residue proline 931 is modified to 3-hydroxyproline. Residues proline 932, proline 935, and proline 938 each carry the 4-hydroxyproline modification.

Belongs to the fibrillar collagen family. Trimers of one alpha 2(I) and two alpha 1(I) chains. Post-translationally, contains mostly 4-hydroxyproline. Proline residues at the third position of the tripeptide repeating unit (G-X-Y) are hydroxylated in some or all of the chains. Contains 3-hydroxyproline at a few sites. This modification occurs on the first proline residue in the sequence motif Gly-Pro-Hyp, where Hyp is 4-hydroxyproline. In terms of processing, lysine residues at the third position of the tripeptide repeating unit (G-X-Y) are 5-hydroxylated in some or all of the chains. Post-translationally, O-glycosylated on hydroxylated lysine residues. The O-linked glycan consists of a Glc-Gal disaccharide. As to expression, expressed in bones.

The protein resides in the secreted. It localises to the extracellular space. It is found in the extracellular matrix. In terms of biological role, type I collagen is a member of group I collagen (fibrillar forming collagen). The chain is Collagen alpha-1(I) chain from Megalonyx jeffersonii (Jefferson's ground sloth).